The primary structure comprises 385 residues: Neuropeptide Y receptor type 2 (385 aa).

The Extracellular portion of the chain corresponds to 1-54; sequence MGPLEAIGEENQTDEMKMELFTKLYLPRYTTPVSELALDPKPELKDSTTLVEVQ. The N-linked (GlcNAc...) asparagine glycan is linked to Asn-11. Residues 55-75 form a helical membrane-spanning segment; sequence IILIFAYCSIILLGVIGNSLV. At 76–90 the chain is on the cytoplasmic side; that stretch reads IHVIIKFKSMRTVTN. A helical transmembrane segment spans residues 91-111; that stretch reads FFIANLAVADLLVNTLCLPFT. Topologically, residues 112–128 are extracellular; the sequence is LVYTLLGEWKLGPVLCH. Cys-127 and Cys-207 form a disulfide bridge. A helical membrane pass occupies residues 129-149; the sequence is LVPYAQALAVHVSTVTLTVIA. The Cytoplasmic portion of the chain corresponds to 150-169; the sequence is LDRHRCIVYHLESKISKRIS. The chain crosses the membrane as a helical span at residues 170–190; it reads FLIIGVAWAVSALLASPLAIF. Over 191–221 the chain is Extracellular; that stretch reads REYSLIEIIPDFKIVVCSEKWPGEGQLNYGT. A helical membrane pass occupies residues 222–242; sequence IYSVSMLLIQYVLPLAIISYA. At 243-273 the chain is on the cytoplasmic side; it reads YTRIWTKLKNHVSPGAGNDHYHHRRQKTTKM. A helical transmembrane segment spans residues 274–294; it reads LVCVVVVFAVSWLPFHAFQLV. Residues 295-308 lie on the Extracellular side of the membrane; the sequence is SDIDSQVLDLKEYK. The helical transmembrane segment at 309-329 threads the bilayer; the sequence is LIYTVFHVIAMCSTFANPLLY. Topologically, residues 330–385 are cytoplasmic; the sequence is GWMNNNYRTAFLTAFQCEQRLDSIHPEVSAAFKARKKLEAKKSQFPGDSFTQPTNV. The S-palmitoyl cysteine moiety is linked to residue Cys-346.

The protein belongs to the G-protein coupled receptor 1 family.

Its subcellular location is the cell membrane. In terms of biological role, receptor for neuropeptide Y and peptide YY. In Gallus gallus (Chicken), this protein is Neuropeptide Y receptor type 2 (NPY2R).